A 98-amino-acid chain; its full sequence is MSITYMNMFMAFTISLLGLLMYRSHMMSSLLCLEGMMLSLFVMMTMAILNTHLTLASMIPIILLVFAACEAALGLSLLVMVSTTYGMDYVQNLNLLQC.

A run of 3 helical transmembrane segments spans residues 1 to 21 (MSIT…GLLM), 29 to 49 (SLLC…MAIL), and 61 to 81 (IILL…LVMV).

It belongs to the complex I subunit 4L family. As to quaternary structure, core subunit of respiratory chain NADH dehydrogenase (Complex I) which is composed of 45 different subunits.

It localises to the mitochondrion inner membrane. It carries out the reaction a ubiquinone + NADH + 5 H(+)(in) = a ubiquinol + NAD(+) + 4 H(+)(out). Its function is as follows. Core subunit of the mitochondrial membrane respiratory chain NADH dehydrogenase (Complex I) which catalyzes electron transfer from NADH through the respiratory chain, using ubiquinone as an electron acceptor. Part of the enzyme membrane arm which is embedded in the lipid bilayer and involved in proton translocation. This Mesophylla macconnelli (MacConnell's bat) protein is NADH-ubiquinone oxidoreductase chain 4L (MT-ND4L).